Here is a 62-residue protein sequence, read N- to C-terminus: Short neurotoxin B (62 aa).

Over residues Arg-1 to Ser-16 the composition is skewed to polar residues. Residues Arg-1–Glu-21 are disordered. 4 disulfide bridges follow: Cys-3/Cys-24, Cys-17/Cys-41, Cys-43/Cys-54, and Cys-55/Cys-60.

This sequence belongs to the three-finger toxin family. Short-chain subfamily. Type I alpha-neurotoxin sub-subfamily. As to expression, expressed by the venom gland.

The protein resides in the secreted. In terms of biological role, binds to muscle nicotinic acetylcholine receptor (nAChR) and inhibit acetylcholine from binding to the receptor, thereby impairing neuromuscular transmission. This Laticauda crockeri (Crocker's sea snake) protein is Short neurotoxin B.